The sequence spans 467 residues: 3-isopropylmalate dehydratase large subunit (467 aa).

Cys-347, Cys-407, and Cys-410 together coordinate [4Fe-4S] cluster.

Belongs to the aconitase/IPM isomerase family. LeuC type 1 subfamily. Heterodimer of LeuC and LeuD. The cofactor is [4Fe-4S] cluster.

It carries out the reaction (2R,3S)-3-isopropylmalate = (2S)-2-isopropylmalate. It participates in amino-acid biosynthesis; L-leucine biosynthesis; L-leucine from 3-methyl-2-oxobutanoate: step 2/4. Catalyzes the isomerization between 2-isopropylmalate and 3-isopropylmalate, via the formation of 2-isopropylmaleate. This is 3-isopropylmalate dehydratase large subunit from Crocosphaera subtropica (strain ATCC 51142 / BH68) (Cyanothece sp. (strain ATCC 51142)).